The primary structure comprises 355 residues: Butyrate kinase 1 (355 aa).

This sequence belongs to the acetokinase family.

The protein localises to the cytoplasm. The catalysed reaction is butanoate + ATP = butanoyl phosphate + ADP. It functions in the pathway lipid metabolism; butanoate metabolism. Functionally, catalyzes the conversion of butyryl-CoA through butyryl phosphate to butyrate. This chain is Butyrate kinase 1 (buk1), found in Clostridium acetobutylicum (strain ATCC 824 / DSM 792 / JCM 1419 / IAM 19013 / LMG 5710 / NBRC 13948 / NRRL B-527 / VKM B-1787 / 2291 / W).